The primary structure comprises 101 residues: uncharacterized protein (101 aa).

The N-terminal stretch at 1–17 (MKKAAVLAVVLSLGLAG) is a signal peptide. Cysteine 18 carries the N-palmitoyl cysteine lipid modification. Cysteine 18 carries the S-diacylglycerol cysteine lipid modification.

The protein resides in the cell membrane. This is an uncharacterized protein from Pasteurella multocida (strain Pm70).